The chain runs to 239 residues: Mediator of RNA polymerase II transcription subunit 4 (239 aa).

The tract at residues Gln-168–Asn-221 is disordered. Basic and acidic residues predominate over residues Asp-188 to Lys-198. 2 positions are modified to phosphoserine: Ser-204 and Ser-218.

The protein belongs to the Mediator complex subunit 4 family. Component of the Mediator complex.

The protein resides in the nucleus. Component of the Mediator complex, a coactivator involved in the regulated transcription of nearly all RNA polymerase II-dependent genes. Mediator functions as a bridge to convey information from gene-specific regulatory proteins to the basal RNA polymerase II transcription machinery. Mediator is recruited to promoters by direct interactions with regulatory proteins and serves as a scaffold for the assembly of a functional preinitiation complex with RNA polymerase II and the general transcription factors. This chain is Mediator of RNA polymerase II transcription subunit 4 (med4), found in Schizosaccharomyces pombe (strain 972 / ATCC 24843) (Fission yeast).